Consider the following 455-residue polypeptide: Bifunctional protein GlmU (455 aa).

Residues 1 to 226 are pyrophosphorylase; sequence MSLDIVILAA…AMEVQGANDR (226 aa). Residues 8–11, Lys-22, Gln-73, 78–79, 99–101, Gly-136, Glu-151, Asn-166, and Asn-224 contribute to the UDP-N-acetyl-alpha-D-glucosamine site; these read LAAG, GT, and YGD. Asp-101 lines the Mg(2+) pocket. Asn-224 is a Mg(2+) binding site. A linker region spans residues 227-247; sequence RQLSELERHYQLREGRRLMAQ. The interval 248–455 is N-acetyltransferase; it reads GVTLRDPARF…WKRPEKIKKS (208 aa). Residues Arg-330 and Lys-348 each contribute to the UDP-N-acetyl-alpha-D-glucosamine site. The active-site Proton acceptor is the His-360. UDP-N-acetyl-alpha-D-glucosamine is bound by residues Tyr-363 and Asn-374. Residues Ala-377, 383-384, Ser-402, Ala-420, and Arg-437 each bind acetyl-CoA; that span reads NY.

The protein in the N-terminal section; belongs to the N-acetylglucosamine-1-phosphate uridyltransferase family. It in the C-terminal section; belongs to the transferase hexapeptide repeat family. Homotrimer. It depends on Mg(2+) as a cofactor.

It is found in the cytoplasm. It catalyses the reaction alpha-D-glucosamine 1-phosphate + acetyl-CoA = N-acetyl-alpha-D-glucosamine 1-phosphate + CoA + H(+). The catalysed reaction is N-acetyl-alpha-D-glucosamine 1-phosphate + UTP + H(+) = UDP-N-acetyl-alpha-D-glucosamine + diphosphate. The protein operates within nucleotide-sugar biosynthesis; UDP-N-acetyl-alpha-D-glucosamine biosynthesis; N-acetyl-alpha-D-glucosamine 1-phosphate from alpha-D-glucosamine 6-phosphate (route II): step 2/2. It participates in nucleotide-sugar biosynthesis; UDP-N-acetyl-alpha-D-glucosamine biosynthesis; UDP-N-acetyl-alpha-D-glucosamine from N-acetyl-alpha-D-glucosamine 1-phosphate: step 1/1. Its pathway is bacterial outer membrane biogenesis; LPS lipid A biosynthesis. In terms of biological role, catalyzes the last two sequential reactions in the de novo biosynthetic pathway for UDP-N-acetylglucosamine (UDP-GlcNAc). The C-terminal domain catalyzes the transfer of acetyl group from acetyl coenzyme A to glucosamine-1-phosphate (GlcN-1-P) to produce N-acetylglucosamine-1-phosphate (GlcNAc-1-P), which is converted into UDP-GlcNAc by the transfer of uridine 5-monophosphate (from uridine 5-triphosphate), a reaction catalyzed by the N-terminal domain. The chain is Bifunctional protein GlmU from Pseudomonas putida (strain ATCC 700007 / DSM 6899 / JCM 31910 / BCRC 17059 / LMG 24140 / F1).